Consider the following 245-residue polypeptide: Glutathione S-transferase T1 (245 aa).

The 82-residue stretch at 2-83 folds into the GST N-terminal domain; the sequence is MKLKVYADRM…YLSSAFPSVA (82 aa). Residues 12–13, 41–42, 54–55, and 67–68 contribute to the glutathione site; these read SQ, QL, KV, and ES. The 144-residue stretch at 90–233 folds into the GST C-terminal domain; that stretch reads DLSKRAKIHS…KEGFQKRREM (144 aa). The short motif at 243 to 245 is the Microbody targeting signal element; sequence SKI.

Belongs to the GST superfamily. Theta family.

It is found in the nucleus. Its subcellular location is the peroxisome. It carries out the reaction RX + glutathione = an S-substituted glutathione + a halide anion + H(+). Functionally, in vitro, possesses glutathione S-transferase activity toward 1-chloro-2,4-dinitrobenzene (CDNB) and p-nitrobenzyl chloride (pNBC), and glutathione peroxidase activity toward cumene hydroperoxide and linoleic acid-13-hydroperoxide. May be involved in the conjugation of reduced glutathione to a wide number of exogenous and endogenous hydrophobic electrophiles and have a detoxification role against certain herbicides. The sequence is that of Glutathione S-transferase T1 (GSTT1) from Arabidopsis thaliana (Mouse-ear cress).